Reading from the N-terminus, the 251-residue chain is MKNYLFEVCTNSVESCIAAQEGGANRVELCAGIPEGGTTPSYGEIAMAREVLTTTRLHVIIRPRGGDFLYSPVEVKTMLKDIEMARQLGADGVVFGCLTTNGGIDVPVMKQLMEASKGLSVTFHRAFDVCRDASEALEQIIDLGCDRILTSGQQATAELGIPLLKELRERANGRITLLAGCGVNEKNICRIAKETGIQEFHFSARESIKSGMEYKNEAVSMGGTVHISEYERNVTTVKRVKDTIESITSSL.

The protein belongs to the CutC family.

Its subcellular location is the cytoplasm. The sequence is that of PF03932 family protein CutC from Bacteroides fragilis (strain ATCC 25285 / DSM 2151 / CCUG 4856 / JCM 11019 / LMG 10263 / NCTC 9343 / Onslow / VPI 2553 / EN-2).